Reading from the N-terminus, the 138-residue chain is Phospholipase A2 crotoxin basic chain CBa2 (138 aa).

Positions 1-16 (MRALWIVAVLLVGVEG) are cleaved as a signal peptide. 7 disulfide bridges follow: Cys42–Cys131, Cys44–Cys60, Cys59–Cys111, Cys65–Cys138, Cys66–Cys104, Cys73–Cys97, and Cys91–Cys102. Positions 43, 45, and 47 each coordinate Ca(2+). Residue His63 is part of the active site. Position 64 (Asp64) interacts with Ca(2+). Asp105 is an active-site residue.

It belongs to the phospholipase A2 family. Group II subfamily. D49 sub-subfamily. In terms of assembly, heterodimer of one of the acidic (CA1, CA2, CA3 or CA4) and one of the basic (CBa1, CBa2, CBb, CBc or CBd) subunits; non-covalently linked. The acidic subunit is non-toxic, without enzymatic activity and comprises 3 peptides that are cross-linked by 5 disulfide bridges. The basic subunit is toxic, has phospholipase A2 activity and is composed of a single chain. Multiple variants of each subunit give different crotoxin complexes that can be subdivided into 2 classes: (1) those of high toxicity, low PLA2 activity (CBb, CBc and CBd linked with high affinity to any CA) and high stability (K(d)=4.5 nM) and (2) those of moderate toxicity, high PLA2 activity (CBa2 linked with low affinity to any CA) and low stability (K(d)=25 nM). Interacts with human NBD1 domain of CFTR. Ca(2+) serves as cofactor. As to expression, expressed by the venom gland.

Its subcellular location is the secreted. It carries out the reaction a 1,2-diacyl-sn-glycero-3-phosphocholine + H2O = a 1-acyl-sn-glycero-3-phosphocholine + a fatty acid + H(+). In terms of biological role, heterodimer CA-CB: Crotoxin is a potent presynaptic neurotoxin that possesses phospholipase A2 (PLA2) activity and exerts a lethal action by blocking neuromuscular transmission. It consists of a non-covalent association of a basic and weakly toxic PLA2 subunit (CBa2, CBb, CBc, or CBd), with a small acidic, non-enzymatic and non-toxic subunit (CA1, CA2, CA3 or CA4). The complex acts by binding to a specific 48-kDa protein (R48) receptor located on presynaptic membranes, forming a transient ternary complex CA-CB-R48, followed by dissociation of the CA-CB complex and release of the CA subunit. At equilibrium, only the CB subunits remain associated with the specific crotoxin receptor. In addition to neurotoxicity, crotoxin has been found to exert myotoxicity, nephrotoxicity, and cardiovascular toxicity. Moreover, anti-inflammatory, immunomodulatory, anti-tumor and analgesic effects of crotoxin have also been reported. Functionally, monomer CBa2: The basic subunit of crotoxin is a snake venom phospholipase A2 (PLA2) that exhibits weak neurotoxicity (10-fold less than the heterodimer) and strong anticoagulant effects by binding to factor Xa (F10) and inhibiting the prothrombinase activity (IC(50) is 41 nM). In addition, it shows the same effects described for the heterodimer and binds the nucleotide-binding domain (NBD1) of CFTR chloride channels and increases the channel current. PLA2 catalyzes the calcium-dependent hydrolysis of the 2-acyl groups in 3-sn-phosphoglycerides. The protein is Phospholipase A2 crotoxin basic chain CBa2 of Crotalus durissus terrificus (South American rattlesnake).